The sequence spans 288 residues: Polyamine aminopropyltransferase (288 aa).

In terms of domain architecture, PABS spans 9–242 (SEWLDEYHQG…GLWSWTFASM (234 aa)). Residue glutamine 36 coordinates S-methyl-5'-thioadenosine. 2 residues coordinate spermidine: histidine 67 and aspartate 91. S-methyl-5'-thioadenosine-binding positions include glutamate 111 and 143–144 (NG). The active-site Proton acceptor is aspartate 162. An S-methyl-5'-thioadenosine-binding site is contributed by proline 169.

This sequence belongs to the spermidine/spermine synthase family. Homodimer or homotetramer.

The protein localises to the cytoplasm. It catalyses the reaction S-adenosyl 3-(methylsulfanyl)propylamine + putrescine = S-methyl-5'-thioadenosine + spermidine + H(+). It participates in amine and polyamine biosynthesis; spermidine biosynthesis; spermidine from putrescine: step 1/1. Catalyzes the irreversible transfer of a propylamine group from the amino donor S-adenosylmethioninamine (decarboxy-AdoMet) to putrescine (1,4-diaminobutane) to yield spermidine. This is Polyamine aminopropyltransferase from Prochlorococcus marinus (strain NATL2A).